The primary structure comprises 675 residues: DNA gyrase subunit B (675 aa).

The Toprim domain occupies 453 to 567 (SELYVVEGDS…NGHIFLAQPP (115 aa)). The Mg(2+) site is built by glutamate 459, aspartate 532, and aspartate 534.

The protein belongs to the type II topoisomerase GyrB family. Heterotetramer, composed of two GyrA and two GyrB chains. In the heterotetramer, GyrA contains the active site tyrosine that forms a transient covalent intermediate with DNA, while GyrB binds cofactors and catalyzes ATP hydrolysis. Mg(2+) serves as cofactor. It depends on Mn(2+) as a cofactor. The cofactor is Ca(2+).

It is found in the cytoplasm. The enzyme catalyses ATP-dependent breakage, passage and rejoining of double-stranded DNA.. Inhibited by 4-quinoline drugs (nalidixic acid, ciprofloxacin, ofloxacin), although it is much less sensitive than the corresponding enzyme from E.coli. GyrB intrinsic ATPase activity inhibited by aminopyrazinamide and pyrrolamide derivatives. Its function is as follows. A type II topoisomerase that negatively supercoils closed circular double-stranded (ds) DNA in an ATP-dependent manner to modulate DNA topology and maintain chromosomes in an underwound state. Negative supercoiling favors strand separation, and DNA replication, transcription, recombination and repair, all of which involve strand separation. Also able to catalyze the interconversion of other topological isomers of dsDNA rings, including catenanes and knotted rings. Type II topoisomerases break and join 2 DNA strands simultaneously in an ATP-dependent manner. The protein is DNA gyrase subunit B of Mycolicibacterium smegmatis (strain ATCC 700084 / mc(2)155) (Mycobacterium smegmatis).